The chain runs to 358 residues: tRNA pseudouridine synthase D (358 aa).

The active-site Nucleophile is Asp-84. A TRUD domain is found at 161–312; sequence GTPNYFGPQR…RRSLRLMVAD (152 aa).

Belongs to the pseudouridine synthase TruD family.

The catalysed reaction is uridine(13) in tRNA = pseudouridine(13) in tRNA. Functionally, responsible for synthesis of pseudouridine from uracil-13 in transfer RNAs. This chain is tRNA pseudouridine synthase D, found in Nitrosococcus oceani (strain ATCC 19707 / BCRC 17464 / JCM 30415 / NCIMB 11848 / C-107).